Consider the following 380-residue polypeptide: Cytochrome b (380 aa).

Transmembrane regions (helical) follow at residues 34–54, 78–99, 114–134, and 179–199; these read FGSLLGICLLTQILTGLLLAM, WLIRNLHANGASFFFICIYLHI, WNTGVILLLTLMATAFVGYVL, and FFALHFLLPFMIAGLTLIHLT. 2 residues coordinate heme b: His-84 and His-98. Heme b is bound by residues His-183 and His-197. Position 202 (His-202) interacts with a ubiquinone. 4 helical membrane passes run 227 to 247, 289 to 309, 321 to 341, and 348 to 368; these read LKDILGFMLLLLPLTTLALFS, LGGVLALAASVLVLFLAPFLH, ISQLLFWILVANLFILTWVGS, and FIIIGQLASLTYFTILLILFP.

It belongs to the cytochrome b family. As to quaternary structure, the cytochrome bc1 complex contains 11 subunits: 3 respiratory subunits (MT-CYB, CYC1 and UQCRFS1), 2 core proteins (UQCRC1 and UQCRC2) and 6 low-molecular weight proteins (UQCRH/QCR6, UQCRB/QCR7, UQCRQ/QCR8, UQCR10/QCR9, UQCR11/QCR10 and a cleavage product of UQCRFS1). This cytochrome bc1 complex then forms a dimer. The cofactor is heme b.

It is found in the mitochondrion inner membrane. In terms of biological role, component of the ubiquinol-cytochrome c reductase complex (complex III or cytochrome b-c1 complex) that is part of the mitochondrial respiratory chain. The b-c1 complex mediates electron transfer from ubiquinol to cytochrome c. Contributes to the generation of a proton gradient across the mitochondrial membrane that is then used for ATP synthesis. In Puffinus opisthomelas (Black-vented shearwater), this protein is Cytochrome b (MT-CYB).